The chain runs to 171 residues: 3-hydroxydecanoyl-[acyl-carrier-protein] dehydratase (171 aa).

Residue histidine 70 is part of the active site.

The protein belongs to the thioester dehydratase family. FabA subfamily. Homodimer.

The protein resides in the cytoplasm. The catalysed reaction is a (3R)-hydroxyacyl-[ACP] = a (2E)-enoyl-[ACP] + H2O. It catalyses the reaction (3R)-hydroxydecanoyl-[ACP] = (2E)-decenoyl-[ACP] + H2O. The enzyme catalyses (2E)-decenoyl-[ACP] = (3Z)-decenoyl-[ACP]. It participates in lipid metabolism; fatty acid biosynthesis. Its function is as follows. Necessary for the introduction of cis unsaturation into fatty acids. Catalyzes the dehydration of (3R)-3-hydroxydecanoyl-ACP to E-(2)-decenoyl-ACP and then its isomerization to Z-(3)-decenoyl-ACP. Can catalyze the dehydratase reaction for beta-hydroxyacyl-ACPs with saturated chain lengths up to 16:0, being most active on intermediate chain length. The protein is 3-hydroxydecanoyl-[acyl-carrier-protein] dehydratase of Pseudomonas syringae pv. syringae (strain B728a).